The primary structure comprises 186 residues: MSSHKAGVTGVAERYATALYELAEDRGALDQVSADLRSLKAMLDESGDLRRVIASPVIGRDDQRKALTALAEKAGFHEIVRNFLGVVAAKHRSFAVPGMIGAFLERLAARRGEVTARIVSATALTSAQKSALTTALNKATGNTVTIDASVDPALLGGMVVRVGSRMVDSSLSTKLKRLQLAMKGVG.

This sequence belongs to the ATPase delta chain family. F-type ATPases have 2 components, F(1) - the catalytic core - and F(0) - the membrane proton channel. F(1) has five subunits: alpha(3), beta(3), gamma(1), delta(1), epsilon(1). CF(0) has four main subunits: a(1), b(1), b'(1) and c(10-14). The alpha and beta chains form an alternating ring which encloses part of the gamma chain. F(1) is attached to F(0) by a central stalk formed by the gamma and epsilon chains, while a peripheral stalk is formed by the delta, b and b' chains.

The protein localises to the cell inner membrane. In terms of biological role, f(1)F(0) ATP synthase produces ATP from ADP in the presence of a proton or sodium gradient. F-type ATPases consist of two structural domains, F(1) containing the extramembraneous catalytic core and F(0) containing the membrane proton channel, linked together by a central stalk and a peripheral stalk. During catalysis, ATP synthesis in the catalytic domain of F(1) is coupled via a rotary mechanism of the central stalk subunits to proton translocation. This protein is part of the stalk that links CF(0) to CF(1). It either transmits conformational changes from CF(0) to CF(1) or is implicated in proton conduction. The chain is ATP synthase subunit delta from Rhodospirillum rubrum (strain ATCC 11170 / ATH 1.1.1 / DSM 467 / LMG 4362 / NCIMB 8255 / S1).